Here is a 315-residue protein sequence, read N- to C-terminus: Glycine--tRNA ligase alpha subunit (315 aa).

The protein belongs to the class-II aminoacyl-tRNA synthetase family. As to quaternary structure, tetramer of two alpha and two beta subunits.

The protein resides in the cytoplasm. The enzyme catalyses tRNA(Gly) + glycine + ATP = glycyl-tRNA(Gly) + AMP + diphosphate. The chain is Glycine--tRNA ligase alpha subunit from Pseudomonas putida (strain ATCC 47054 / DSM 6125 / CFBP 8728 / NCIMB 11950 / KT2440).